Reading from the N-terminus, the 355-residue chain is dTDP-D-glucose 4,6-dehydratase (355 aa).

Substrate is bound at residue T142. D143 (proton donor) is an active-site residue. Active-site proton acceptor residues include E144 and Y166.

This sequence belongs to the NAD(P)-dependent epimerase/dehydratase family. dTDP-glucose dehydratase subfamily. NAD(+) is required as a cofactor.

The catalysed reaction is dTDP-alpha-D-glucose = dTDP-4-dehydro-6-deoxy-alpha-D-glucose + H2O. This chain is dTDP-D-glucose 4,6-dehydratase (TGDS), found in Bos taurus (Bovine).